The following is a 122-amino-acid chain: Small ribosomal subunit protein uS13 (122 aa).

The segment at 97–122 is disordered; sequence PVRGQRTKTNARTRKGPARTVAGKKK.

Belongs to the universal ribosomal protein uS13 family. Part of the 30S ribosomal subunit. Forms a loose heterodimer with protein S19. Forms two bridges to the 50S subunit in the 70S ribosome.

Functionally, located at the top of the head of the 30S subunit, it contacts several helices of the 16S rRNA. In the 70S ribosome it contacts the 23S rRNA (bridge B1a) and protein L5 of the 50S subunit (bridge B1b), connecting the 2 subunits; these bridges are implicated in subunit movement. Contacts the tRNAs in the A and P-sites. The protein is Small ribosomal subunit protein uS13 of Geobacter metallireducens (strain ATCC 53774 / DSM 7210 / GS-15).